Consider the following 843-residue polypeptide: OTU domain-containing protein 7B (843 aa).

The disordered stretch occupies residues 50 to 88; it reads GNLPPSFSEGSGGSRTPEKGFSDREPTRPPRPILQRQDD. Positions 65 to 77 are enriched in basic and acidic residues; sequence TPEKGFSDREPTR. Ser100 is modified (phosphoserine). Residues 152 to 401 form a TRAF-binding region; sequence ERDLIEQSML…AVDPGKGWEW (250 aa). The interval 167-440 is catalytic; it reads AGRLNWWVSV…VKWIPLSSDA (274 aa). The region spanning 183 to 365 is the OTU domain; the sequence is LLPLATTGDG…QAHFSALVSM (183 aa). The segment at 187 to 193 is regulatory loop; sequence ATTGDGN. The active site involves Asp191. The Nucleophile role is filled by Cys194. His358 acts as the Proton acceptor in catalysis. Disordered stretches follow at residues 442–587 and 652–711; these read APLA…GGSK and IMNG…CQEP. Basic and acidic residues-rich tracts occupy residues 456–471 and 488–500; these read DEPR…DKES and SKRD…KRAD. Phosphoserine is present on residues Ser464, Ser467, and Ser471. The Nuclear localization signal motif lies at 483-498; sequence RRKEKSKRDREKDKKR. The segment covering 531 to 543 has biased composition (gly residues); that stretch reads KPGGVGTGLGGSS. A compositionally biased stretch (basic and acidic residues) spans 665–675; that stretch reads KKPEPDAREEQ. Thr729 is modified (phosphothreonine). The tract at residues 732-792 is disordered; it reads RQCPPGRPYP…PEPDGWAGGL (61 aa). An A20-type zinc finger spans residues 796–831; that stretch reads PPTQTKCKQPNCSFYGHPETNNFCSCCYREELRRRE. Zn(2+) is bound by residues Cys802, Cys807, Cys819, and Cys822.

This sequence belongs to the peptidase C64 family. In terms of assembly, interacts with ZAP70 in activated T cells, but not in resting T cells. Interacts with TRAF3. Interacts with TRAF6. Interacts with PARK7, leading to inhibit deubiquitinase activity. Interacts with EGFR, ITCH and NEDD4. Post-translationally, phosphorylated by EGFR. In terms of tissue distribution, widely expressed. Abundant in kidney, heart and fetal liver. Expressed differentially among B-cells at distinct developmental stages. Higher expression seen in primary immature B-cells as compared to the mature cells.

The protein localises to the cytoplasm. It localises to the nucleus. It catalyses the reaction Thiol-dependent hydrolysis of ester, thioester, amide, peptide and isopeptide bonds formed by the C-terminal Gly of ubiquitin (a 76-residue protein attached to proteins as an intracellular targeting signal).. With respect to regulation, deubiquitinase activity is inhibited following interaction with PARK7. Its function is as follows. Negative regulator of the non-canonical NF-kappa-B pathway that acts by mediating deubiquitination of TRAF3, an inhibitor of the NF-kappa-B pathway, thereby acting as a negative regulator of B-cell responses. In response to non-canonical NF-kappa-B stimuli, deubiquitinates 'Lys-48'-linked polyubiquitin chains of TRAF3, preventing TRAF3 proteolysis and over-activation of non-canonical NF-kappa-B. Negatively regulates mucosal immunity against infections. Deubiquitinates ZAP70, and thereby regulates T cell receptor (TCR) signaling that leads to the activation of NF-kappa-B. Plays a role in T cell homeostasis and is required for normal T cell responses, including production of IFNG and IL2. Mediates deubiquitination of EGFR. Has deubiquitinating activity toward 'Lys-11', 'Lys-48' and 'Lys-63'-linked polyubiquitin chains. Has a much higher catalytic rate with 'Lys-11'-linked polyubiquitin chains (in vitro); however the physiological significance of these data are unsure. Hydrolyzes both linear and branched forms of polyubiquitin. Acts as a regulator of mTORC1 and mTORC2 assembly by mediating 'Lys-63'-linked deubiquitination of MLST8, thereby promoting assembly of the mTORC2 complex, while inibiting formation of the mTORC1 complex. The polypeptide is OTU domain-containing protein 7B (OTUD7B) (Homo sapiens (Human)).